The following is a 303-amino-acid chain: Glutathione transport system permease protein GsiD (303 aa).

Transmembrane regions (helical) follow at residues 40 to 60 (AMTAALFVILLIVVAIFARWI), 105 to 125 (LAAGVFAVFIGAAIGTLLGLL), 144 to 164 (LFAFPGILLAIAVVAVLGSGI), 165 to 185 (ANVIIAVAIFSIPAFARLVRG), 222 to 242 (IVVFFTMRIGTSIISAASLSF), and 266 to 286 (VIAPHVAVFPALAIFLTVLAF). Residues 101–290 (AQISLAAGVF…LTVLAFNLLG (190 aa)) form the ABC transmembrane type-1 domain.

It belongs to the binding-protein-dependent transport system permease family. As to quaternary structure, the complex is composed of two ATP-binding proteins (GsiA), two transmembrane proteins (GsiC and GsiD) and a solute-binding protein (GsiB).

The protein resides in the cell inner membrane. In terms of biological role, part of the ABC transporter complex GsiABCD involved in glutathione import. Probably responsible for the translocation of the substrate across the membrane. In Escherichia coli O157:H7, this protein is Glutathione transport system permease protein GsiD.